The following is a 316-amino-acid chain: Apolipoprotein E (316 aa).

Residues 1-18 form the signal peptide; it reads MKVLWVAVVVALLAGCQA. 8 consecutive repeat copies span residues 79-100, 101-122, 123-144, 145-166, 167-188, 189-210, 211-232, and 233-254. The tract at residues 79-254 is 8 X 22 AA approximate tandem repeats; it reads ALMEETMKEV…RLDKIRQQLE (176 aa). A Methionine sulfoxide modification is found at methionine 142. Serine 146 carries the post-translational modification Phosphoserine; by FAM20C. The segment at 157 to 167 is LDL and other lipoprotein receptors binding; sequence HLRKLRKRLLR. Residue 161 to 164 participates in heparin binding; sequence LRKR. The segment at 209-289 is lipid-binding and lipoprotein association; that stretch reads AATLSTLAGQ…SWFEPLVEDM (81 aa). O-linked (GalNAc...) threonine glycosylation is present at threonine 211. Residue 228 to 235 coordinates heparin; that stretch reads RQKLHGRL. A homooligomerization region spans residues 265–316; it reads NQMRLQAEAFQARLRSWFEPLVEDMQRQWAGLVEKVQLALRPSPTSPPSENH. A specificity for association with VLDL region spans residues 277 to 289; that stretch reads RLRSWFEPLVEDM.

Belongs to the apolipoprotein A1/A4/E family. As to quaternary structure, homotetramer. May interact with ABCA1; functionally associated with ABCA1 in the biogenesis of HDLs. May interact with APP/A4 amyloid-beta peptide; the interaction is extremely stable in vitro but its physiological significance is unclear. May interact with MAPT. May interact with MAP2. In the cerebrospinal fluid, interacts with secreted SORL1. Interacts with PMEL; this allows the loading of PMEL luminal fragment on ILVs to induce fibril nucleation. Post-translationally, APOE exists as multiple glycosylated and sialylated glycoforms within cells and in plasma. The extent of glycosylation and sialylation are tissue and context specific. In terms of processing, glycated in plasma VLDL. Phosphorylated by FAM20C in the extracellular medium.

The protein resides in the secreted. It localises to the extracellular space. Its subcellular location is the extracellular matrix. It is found in the extracellular vesicle. The protein localises to the endosome. The protein resides in the multivesicular body. Functionally, APOE is an apolipoprotein, a protein associating with lipid particles, that mainly functions in lipoprotein-mediated lipid transport between organs via the plasma and interstitial fluids. APOE is a core component of plasma lipoproteins and is involved in their production, conversion and clearance. Apolipoproteins are amphipathic molecules that interact both with lipids of the lipoprotein particle core and the aqueous environment of the plasma. As such, APOE associates with chylomicrons, chylomicron remnants, very low density lipoproteins (VLDL) and intermediate density lipoproteins (IDL) but shows a preferential binding to high-density lipoproteins (HDL). It also binds a wide range of cellular receptors including the LDL receptor/LDLR and the very low-density lipoprotein receptor/VLDLR that mediate the cellular uptake of the APOE-containing lipoprotein particles. Finally, APOE also has a heparin-binding activity and binds heparan-sulfate proteoglycans on the surface of cells, a property that supports the capture and the receptor-mediated uptake of APOE-containing lipoproteins by cells. The polypeptide is Apolipoprotein E (APOE) (Bos mutus grunniens (Wild yak)).